The chain runs to 727 residues: MNQANFLQELPNVLKRLETGLIIPQLKDILRVFGLRLSGTKAELITRIKQLIERIAIENNTTSWEALKKAIDGDVTSAVCILKYNTYQIYSAAAPIAPPSSASGNRSYSRPFAPVVHSRIRFRKSPFYDILEQFNAPFVVPACVGTRNTISFSFHVTPPALSKLLNDPKQYRVYLFSTPSETIGFGNCLMEFPTPQMELRINNQVAHANYRRLKGKPGTTNPADITDLVSKYAGPPGNNVVIYYMNSTKSYSVVVCFVKVYTIENLVDQIKSRKAESKEKIIERIKNDNQDADIIATSTDISLKCPLSFSRISLPVRSVFCKHIQCFDASAFLEMNKQTPSWMCPVCASHIQFSDLIIDGFMQHILESTPSNSETITVDPEGNWKLNTFDEPVESSEDEFVPKEKVIELSDGEGISTMANKSNDQPTRRASTHNSGPPAKRKRESLVIDLTISDDDENVATSTTESPSNATKENSLSRNVQSPNIDTAISNRSTNVRHGHPGFKDYTVENSPASRERSTSESAQSSVHMGYAGEGGLLSGALRAPSQQNNNNSNTQHSINLHTIVPSPYEPPLSVTPSTAITNLSIPESNRTNSSASSKSFTMNDLILPPLHLKNTTQTNNAHEDAQSSNLSQNHSLFYERIPQRPSYRIEKQNKGIYEDENEQSISAMPIPRAHPQLPKNLLSQTAGPLWDEQQDAQVDWNSELQSNNSYHNSGFEGTGNTFQSID.

An SAP domain is found at 18–52 (ETGLIIPQLKDILRVFGLRLSGTKAELITRIKQLI). Residues 108 to 261 (YSRPFAPVVH…SVVVCFVKVY (154 aa)) enclose the PINIT domain. The SP-RING-type zinc-finger motif lies at 290–371 (QDADIIATST…MQHILESTPS (82 aa)). Zn(2+) is bound by residues Cys-321, His-323, Cys-344, and Cys-347. Phosphoserine is present on residues Ser-395 and Ser-396. Disordered stretches follow at residues 408 to 558 (ELSD…TQHS) and 706 to 727 (QSNN…QSID). Composition is skewed to polar residues over residues 417–435 (TMAN…THNS) and 459–494 (VATS…NRST). The segment covering 546 to 558 (SQQNNNNSNTQHS) has biased composition (low complexity).

This sequence belongs to the PIAS family. As to quaternary structure, interacts with hus5/ubc9.

It is found in the nucleus. The protein operates within protein modification; protein sumoylation. Its function is as follows. Acts as an E3 ligase mediating SUMO/Smt3 attachment to other proteins. Involved in the maintenance of the centromere and in telomere length. Regulates recombination, via extension sumoylation, particularly within the heterochromatin repeats. This Schizosaccharomyces pombe (strain 972 / ATCC 24843) (Fission yeast) protein is E3 SUMO-protein ligase pli1 (pli1).